Consider the following 640-residue polypeptide: Protein ALTERED PHOSPHATE STARVATION RESPONSE 1 (640 aa).

Residues Thr60–Ser175 are disordered. Over residues Pro68–Ser87 the composition is skewed to pro residues. Over residues Pro88–Val103 the composition is skewed to low complexity. Residues Leu104 to Ser118 show a composition bias toward pro residues. Residues Thr144–Val173 show a composition bias toward low complexity. Positions Lys336–Thr371 form a coiled coil.

In terms of tissue distribution, expressed in the root tip of primary and lateral roots, specifically in the meristematic region, including the quiescent center and lateral root cap cells.

The protein resides in the nucleus. Its function is as follows. Required for the coordination of cell differentiation and cell elongation in the root tip. Required for the coordination of cell processes necessary for correct root growth in response to phosphate starvation, through the modulation of the auxin transporter protein PIN7. This chain is Protein ALTERED PHOSPHATE STARVATION RESPONSE 1, found in Arabidopsis thaliana (Mouse-ear cress).